Reading from the N-terminus, the 255-residue chain is Pyrroloquinoline-quinone synthase (255 aa).

Belongs to the PqqC family.

The catalysed reaction is 6-(2-amino-2-carboxyethyl)-7,8-dioxo-1,2,3,4,7,8-hexahydroquinoline-2,4-dicarboxylate + 3 O2 = pyrroloquinoline quinone + 2 H2O2 + 2 H2O + H(+). The protein operates within cofactor biosynthesis; pyrroloquinoline quinone biosynthesis. Ring cyclization and eight-electron oxidation of 3a-(2-amino-2-carboxyethyl)-4,5-dioxo-4,5,6,7,8,9-hexahydroquinoline-7,9-dicarboxylic-acid to PQQ. The chain is Pyrroloquinoline-quinone synthase from Cereibacter sphaeroides (strain ATCC 17023 / DSM 158 / JCM 6121 / CCUG 31486 / LMG 2827 / NBRC 12203 / NCIMB 8253 / ATH 2.4.1.) (Rhodobacter sphaeroides).